Reading from the N-terminus, the 1588-residue chain is Pentafunctional AROM polypeptide (1588 aa).

The 3-dehydroquinate synthase stretch occupies residues 1–392 (MVQLAKVPIL…YGDSAQFVSD (392 aa)). NAD(+) is bound by residues 43–45 (DTN), 78–81 (ETSK), 109–111 (GGV), and D114. 7-phospho-2-dehydro-3-deoxy-D-arabino-heptonate is bound at residue R125. Position 134–135 (134–135 (TS)) interacts with NAD(+). Residues D141 and K147 each coordinate 7-phospho-2-dehydro-3-deoxy-D-arabino-heptonate. K156 provides a ligand contact to NAD(+). N157 contacts 7-phospho-2-dehydro-3-deoxy-D-arabino-heptonate. Residues 174–177 (WLET) and N185 contribute to the NAD(+) site. E189 is a Zn(2+) binding site. 7-phospho-2-dehydro-3-deoxy-D-arabino-heptonate is bound by residues 189 to 192 (EVIK) and K258. E268 serves as the catalytic Proton acceptor; for 3-dehydroquinate synthase activity. Residues 272 to 276 (RNLLN) and H279 each bind 7-phospho-2-dehydro-3-deoxy-D-arabino-heptonate. H279 contacts Zn(2+). H283 acts as the Proton acceptor; for 3-dehydroquinate synthase activity in catalysis. 7-phospho-2-dehydro-3-deoxy-D-arabino-heptonate-binding residues include H295 and K364. H295 provides a ligand contact to Zn(2+). An EPSP synthase region spans residues 405–871 (VYPFKDIPAD…WDVLHSELGA (467 aa)). C853 serves as the catalytic For EPSP synthase activity. The shikimate kinase stretch occupies residues 890 to 1080 (SVVIIGMRAA…IPSGRSAFVC (191 aa)). 895 to 902 (GMRAAGKT) is a binding site for ATP. Residues 1081–1293 (LTFDDLTEQT…AAPGQLTVAQ (213 aa)) are 3-dehydroquinase. H1198 serves as the catalytic Proton acceptor; for 3-dehydroquinate dehydratase activity. Residue K1227 is the Schiff-base intermediate with substrate; for 3-dehydroquinate dehydratase activity of the active site. A shikimate dehydrogenase region spans residues 1306–1588 (PKELFVVGKP…KAIFDAVTKE (283 aa)).

This sequence in the N-terminal section; belongs to the sugar phosphate cyclases superfamily. Dehydroquinate synthase family. In the 2nd section; belongs to the EPSP synthase family. The protein in the 3rd section; belongs to the shikimate kinase family. It in the 4th section; belongs to the type-I 3-dehydroquinase family. This sequence in the C-terminal section; belongs to the shikimate dehydrogenase family. As to quaternary structure, homodimer. It depends on Zn(2+) as a cofactor.

Its subcellular location is the cytoplasm. The enzyme catalyses 7-phospho-2-dehydro-3-deoxy-D-arabino-heptonate = 3-dehydroquinate + phosphate. The catalysed reaction is 3-dehydroquinate = 3-dehydroshikimate + H2O. It catalyses the reaction shikimate + NADP(+) = 3-dehydroshikimate + NADPH + H(+). It carries out the reaction shikimate + ATP = 3-phosphoshikimate + ADP + H(+). The enzyme catalyses 3-phosphoshikimate + phosphoenolpyruvate = 5-O-(1-carboxyvinyl)-3-phosphoshikimate + phosphate. The protein operates within metabolic intermediate biosynthesis; chorismate biosynthesis; chorismate from D-erythrose 4-phosphate and phosphoenolpyruvate: step 2/7. It participates in metabolic intermediate biosynthesis; chorismate biosynthesis; chorismate from D-erythrose 4-phosphate and phosphoenolpyruvate: step 3/7. It functions in the pathway metabolic intermediate biosynthesis; chorismate biosynthesis; chorismate from D-erythrose 4-phosphate and phosphoenolpyruvate: step 4/7. Its pathway is metabolic intermediate biosynthesis; chorismate biosynthesis; chorismate from D-erythrose 4-phosphate and phosphoenolpyruvate: step 5/7. The protein operates within metabolic intermediate biosynthesis; chorismate biosynthesis; chorismate from D-erythrose 4-phosphate and phosphoenolpyruvate: step 6/7. Its function is as follows. The AROM polypeptide catalyzes 5 consecutive enzymatic reactions in prechorismate polyaromatic amino acid biosynthesis. In Saccharomyces cerevisiae (strain YJM789) (Baker's yeast), this protein is Pentafunctional AROM polypeptide.